A 504-amino-acid polypeptide reads, in one-letter code: MSKEDNVMNSFEEQANELMKERFQKLKELQSNGKDPFDVYKVERTHTSKEVKENYEDLEGKTVTVAGRLMSKRVHGKAGFSDIHDRYGKIQLYIKINDVGEEKLKEYKTFDIGDIISVTGTVFKTKTGETSIHITDFQLVCKSLRPLPEKWHGLKDPDLRYRQRYVDLIINQDVRDTFMKRTAIIKTMREYLDNKGFLEVETPILSPIAGGAAAKPFITHHNALNIDMYLRIATELYLKRLIVGGFEKVYEIGRNFRNEGMDIRHNPEFTVIELYEAYADYNDMMEITENMIAYICEKVLGTTKVQYEGTEIDFTPPWRRLTMVDAVREYAGVDFNTIKDDIEARTIAKEKHIEFKKELKDCTKGDVLIGLFEEFCEDKLMQPTFICDYPVENSPLTKKKRGNEAFTERFEGFVFGREVCNAYSELNDSIVQKERFMQQLKERELGDDEAYMMDDDFITSLEVGMPPTGGLGIGIDRLIMFLTDTHSIRDVILFPTMKPQPNNQ.

Positions 411 and 418 each coordinate Mg(2+).

It belongs to the class-II aminoacyl-tRNA synthetase family. As to quaternary structure, homodimer. It depends on Mg(2+) as a cofactor.

Its subcellular location is the cytoplasm. It catalyses the reaction tRNA(Lys) + L-lysine + ATP = L-lysyl-tRNA(Lys) + AMP + diphosphate. In Clostridium botulinum (strain ATCC 19397 / Type A), this protein is Lysine--tRNA ligase.